A 571-amino-acid polypeptide reads, in one-letter code: Proline--tRNA ligase (571 aa).

The protein belongs to the class-II aminoacyl-tRNA synthetase family. ProS type 1 subfamily. Homodimer.

Its subcellular location is the cytoplasm. The enzyme catalyses tRNA(Pro) + L-proline + ATP = L-prolyl-tRNA(Pro) + AMP + diphosphate. Its function is as follows. Catalyzes the attachment of proline to tRNA(Pro) in a two-step reaction: proline is first activated by ATP to form Pro-AMP and then transferred to the acceptor end of tRNA(Pro). As ProRS can inadvertently accommodate and process non-cognate amino acids such as alanine and cysteine, to avoid such errors it has two additional distinct editing activities against alanine. One activity is designated as 'pretransfer' editing and involves the tRNA(Pro)-independent hydrolysis of activated Ala-AMP. The other activity is designated 'posttransfer' editing and involves deacylation of mischarged Ala-tRNA(Pro). The misacylated Cys-tRNA(Pro) is not edited by ProRS. This chain is Proline--tRNA ligase, found in Acinetobacter baumannii (strain AB307-0294).